The primary structure comprises 135 residues: uncharacterized protein (135 aa).

This is an uncharacterized protein from Bacillus subtilis (strain 168).